Consider the following 1087-residue polypeptide: Fanconi-associated nuclease 1 homolog (1087 aa).

Disordered regions lie at residues 1–79 (MKSN…TPIK), 104–154 (FQKA…PNNL), 169–202 (EFLL…NNIT), 459–486 (TQNS…NNNI), 816–835 (ITSD…EKEN), and 842–871 (SVKK…EEEI). Low complexity predominate over residues 41–79 (TTTPPKTPTQPIRFTQNNNKENDKSNNNNNNNNTITPIK). The span at 104–115 (FQKASTPSSPQI) shows a compositional bias: polar residues. Composition is skewed to low complexity over residues 118–154 (KLPQ…PNNL), 182–202 (NTTT…NNIT), and 467–485 (NNNN…NNNN). 2 coiled-coil regions span residues 419–490 (WKSK…KEYD) and 830–874 (KIEK…IIEI). The span at 848-871 (EQEEEEEEEEEGQGQEEEEEEEEI) shows a compositional bias: acidic residues. Residues glutamate 899, aspartate 1023, glutamate 1051, and valine 1052 each coordinate Mn(2+). In terms of domain architecture, VRR-NUC spans 961-1083 (DDLLILLNQS…GCDVEVCLVK (123 aa)).

This sequence belongs to the FAN1 family. It depends on Mn(2+) as a cofactor. The cofactor is Mg(2+).

The catalysed reaction is Hydrolytically removes 5'-nucleotides successively from the 3'-hydroxy termini of 3'-hydroxy-terminated oligonucleotides.. Nuclease required for the repair of DNA interstrand cross-links (ICL). Acts as a 5'-3' exonuclease that anchors at a cut end of DNA and cleaves DNA successively at every third nucleotide, allowing to excise an ICL from one strand through flanking incisions. The polypeptide is Fanconi-associated nuclease 1 homolog (mtmr15) (Dictyostelium discoideum (Social amoeba)).